Here is a 386-residue protein sequence, read N- to C-terminus: Succinate--CoA ligase [ADP-forming] subunit beta (386 aa).

4 residues coordinate ATP: Lys46, Glu99, Ala102, and Glu107. Mg(2+)-binding residues include Asn199 and Asp213. Substrate is bound by residues Asn264 and Gly321–Met323.

It belongs to the succinate/malate CoA ligase beta subunit family. In terms of assembly, heterotetramer of two alpha and two beta subunits. Mg(2+) is required as a cofactor.

The enzyme catalyses succinate + ATP + CoA = succinyl-CoA + ADP + phosphate. It carries out the reaction GTP + succinate + CoA = succinyl-CoA + GDP + phosphate. The protein operates within carbohydrate metabolism; tricarboxylic acid cycle; succinate from succinyl-CoA (ligase route): step 1/1. Functionally, succinyl-CoA synthetase functions in the citric acid cycle (TCA), coupling the hydrolysis of succinyl-CoA to the synthesis of either ATP or GTP and thus represents the only step of substrate-level phosphorylation in the TCA. The beta subunit provides nucleotide specificity of the enzyme and binds the substrate succinate, while the binding sites for coenzyme A and phosphate are found in the alpha subunit. The sequence is that of Succinate--CoA ligase [ADP-forming] subunit beta from Orientia tsutsugamushi (strain Boryong) (Rickettsia tsutsugamushi).